The sequence spans 287 residues: Histone H1 (287 aa).

Low complexity predominate over residues 1-11; the sequence is MATEEPVIVNE. Disordered regions lie at residues 1 to 58 and 120 to 287; these read MATE…THPP and YKLP…RGRK. Over residues 33-51 the composition is skewed to basic residues; the sequence is GKAKKETKAKKPAAPRKRS. The 70-residue stretch at 55 to 124 folds into the H15 domain; it reads THPPYFEMIK…KVKNSYKLPS (70 aa). Residues 135–202 are compositionally biased toward basic residues; it reads AKKKPAAAKS…KAKPVAKAKP (68 aa). Residues 203–248 show a composition bias toward low complexity; sequence KAAAAAKPKAAVKPKAAPAKTKAAVKPNLKAKTTTAKVAKTATRTT. Over residues 276 to 287 the composition is skewed to basic residues; the sequence is PAKKATPKRGRK.

The protein belongs to the histone H1/H5 family.

The protein resides in the nucleus. The protein localises to the chromosome. Histones H1 are necessary for the condensation of nucleosome chains into higher-order structures. The protein is Histone H1 of Solanum lycopersicum (Tomato).